We begin with the raw amino-acid sequence, 82 residues long: U7-hexatoxin-Mg1a (82 aa).

Residues 1–26 (MRTIVFLIVSILLLSSAVLMLAEGNA) form the signal peptide. Positions 27 to 44 (ASHELQEYPIEESLEEQR) are excised as a propeptide. 4 cysteine pairs are disulfide-bonded: Cys-46-Cys-62, Cys-51-Cys-67, Cys-61-Cys-77, and Cys-69-Cys-75. Arginine amide is present on Arg-80.

The protein belongs to the rTX family. Expressed by the venom gland.

It localises to the secreted. In terms of biological role, induces flaccid paralysis when injected into lepidopteran larvae. Intracranial injection into mice causes awkwardness of movement and laboured respiration until death. The protein is U7-hexatoxin-Mg1a of Macrothele gigas (Japanese funnel web spider).